The sequence spans 800 residues: Nuclear cap-binding protein subunit 1 (800 aa).

Residues 1–26 (MSRRRAHDTEDEGYDHRRNKRRRVSE) form a disordered region. Threonine 9 carries the phosphothreonine modification. The MIF4G domain occupies 31 to 243 (EDRLESLILR…CLWAQIRKLR (213 aa)). The disordered stretch occupies residues 669–704 (LSKADSSSSESDEDAPTKRKKPITHADKPSEEAVER). Residues 692–704 (THADKPSEEAVER) are compositionally biased toward basic and acidic residues.

It belongs to the NCBP1 family. In terms of assembly, component of the nuclear cap-binding complex (CBC), a heterodimer composed of Cbp80 and Cbp20 that interacts with m7GpppG-capped RNA.

It localises to the nucleus. Its function is as follows. Component of the cap-binding complex (CBC), which binds cotranscriptionally to the 5'-cap of pre-mRNAs and is involved in various processes such as pre-mRNA splicing and RNA-mediated gene silencing (RNAi). The CBC complex is involved in miRNA-mediated RNA interference via its interaction with Ars2 and is required for primary microRNAs (miRNAs) processing. Also involved in innate immunity via the short interfering RNAs (siRNAs) processing machinery by restricting the viral RNA production. In the CBC complex, Cbp80 does not bind directly capped RNAs (m7GpppG-capped RNA) but is required to stabilize the movement of the N-terminal loop of Cbp20 and lock the CBC into a high affinity cap-binding state with the cap structure. The polypeptide is Nuclear cap-binding protein subunit 1 (Cbp80) (Drosophila persimilis (Fruit fly)).